We begin with the raw amino-acid sequence, 953 residues long: Glycine dehydrogenase (decarboxylating) (953 aa).

Position 705 is an N6-(pyridoxal phosphate)lysine (K705).

It belongs to the GcvP family. In terms of assembly, the glycine cleavage system is composed of four proteins: P, T, L and H. The cofactor is pyridoxal 5'-phosphate.

It catalyses the reaction N(6)-[(R)-lipoyl]-L-lysyl-[glycine-cleavage complex H protein] + glycine + H(+) = N(6)-[(R)-S(8)-aminomethyldihydrolipoyl]-L-lysyl-[glycine-cleavage complex H protein] + CO2. The glycine cleavage system catalyzes the degradation of glycine. The P protein binds the alpha-amino group of glycine through its pyridoxal phosphate cofactor; CO(2) is released and the remaining methylamine moiety is then transferred to the lipoamide cofactor of the H protein. This chain is Glycine dehydrogenase (decarboxylating), found in Sodalis glossinidius (strain morsitans).